A 457-amino-acid chain; its full sequence is Argininosuccinate lyase (457 aa).

Belongs to the lyase 1 family. Argininosuccinate lyase subfamily.

It is found in the cytoplasm. The enzyme catalyses 2-(N(omega)-L-arginino)succinate = fumarate + L-arginine. Its pathway is amino-acid biosynthesis; L-arginine biosynthesis; L-arginine from L-ornithine and carbamoyl phosphate: step 3/3. This is Argininosuccinate lyase from Escherichia coli O157:H7 (strain EC4115 / EHEC).